The primary structure comprises 293 residues: Acetyl-coenzyme A carboxylase carboxyl transferase subunit beta (293 aa).

The region spanning leucine 29–threonine 293 is the CoA carboxyltransferase N-terminal domain. Positions 33, 36, 52, and 55 each coordinate Zn(2+). Residues cysteine 33–cysteine 55 form a C4-type zinc finger.

The protein belongs to the AccD/PCCB family. In terms of assembly, acetyl-CoA carboxylase is a heterohexamer composed of biotin carboxyl carrier protein (AccB), biotin carboxylase (AccC) and two subunits each of ACCase subunit alpha (AccA) and ACCase subunit beta (AccD). Requires Zn(2+) as cofactor.

Its subcellular location is the cytoplasm. It carries out the reaction N(6)-carboxybiotinyl-L-lysyl-[protein] + acetyl-CoA = N(6)-biotinyl-L-lysyl-[protein] + malonyl-CoA. It functions in the pathway lipid metabolism; malonyl-CoA biosynthesis; malonyl-CoA from acetyl-CoA: step 1/1. Its function is as follows. Component of the acetyl coenzyme A carboxylase (ACC) complex. Biotin carboxylase (BC) catalyzes the carboxylation of biotin on its carrier protein (BCCP) and then the CO(2) group is transferred by the transcarboxylase to acetyl-CoA to form malonyl-CoA. In Prochlorococcus marinus (strain AS9601), this protein is Acetyl-coenzyme A carboxylase carboxyl transferase subunit beta.